Here is a 372-residue protein sequence, read N- to C-terminus: Cobalt-precorrin-5B C(1)-methyltransferase (372 aa).

The protein belongs to the CbiD family.

The enzyme catalyses Co-precorrin-5B + S-adenosyl-L-methionine = Co-precorrin-6A + S-adenosyl-L-homocysteine. Its pathway is cofactor biosynthesis; adenosylcobalamin biosynthesis; cob(II)yrinate a,c-diamide from sirohydrochlorin (anaerobic route): step 6/10. In terms of biological role, catalyzes the methylation of C-1 in cobalt-precorrin-5B to form cobalt-precorrin-6A. The protein is Cobalt-precorrin-5B C(1)-methyltransferase of Geobacillus kaustophilus (strain HTA426).